Here is a 549-residue protein sequence, read N- to C-terminus: Glucose-6-phosphate isomerase (549 aa).

N6-acetyllysine occurs at positions 80, 228, and 234. Glu-355 (proton donor) is an active-site residue. Residues His-386 and Lys-514 contribute to the active site.

Belongs to the GPI family.

The protein localises to the cytoplasm. It carries out the reaction alpha-D-glucose 6-phosphate = beta-D-fructose 6-phosphate. The protein operates within carbohydrate biosynthesis; gluconeogenesis. It functions in the pathway carbohydrate degradation; glycolysis; D-glyceraldehyde 3-phosphate and glycerone phosphate from D-glucose: step 2/4. Its function is as follows. Catalyzes the reversible isomerization of glucose-6-phosphate to fructose-6-phosphate. This chain is Glucose-6-phosphate isomerase, found in Shigella flexneri serotype 5b (strain 8401).